Consider the following 326-residue polypeptide: Acetyl-coenzyme A carboxylase carboxyl transferase subunit alpha (326 aa).

Positions 44–298 constitute a CoA carboxyltransferase C-terminal domain; sequence QLESRAEQLR…KEALLFHLNT (255 aa).

This sequence belongs to the AccA family. In terms of assembly, acetyl-CoA carboxylase is a heterohexamer composed of biotin carboxyl carrier protein (AccB), biotin carboxylase (AccC) and two subunits each of ACCase subunit alpha (AccA) and ACCase subunit beta (AccD).

The protein resides in the cytoplasm. The catalysed reaction is N(6)-carboxybiotinyl-L-lysyl-[protein] + acetyl-CoA = N(6)-biotinyl-L-lysyl-[protein] + malonyl-CoA. It participates in lipid metabolism; malonyl-CoA biosynthesis; malonyl-CoA from acetyl-CoA: step 1/1. In terms of biological role, component of the acetyl coenzyme A carboxylase (ACC) complex. First, biotin carboxylase catalyzes the carboxylation of biotin on its carrier protein (BCCP) and then the CO(2) group is transferred by the carboxyltransferase to acetyl-CoA to form malonyl-CoA. This chain is Acetyl-coenzyme A carboxylase carboxyl transferase subunit alpha, found in Synechocystis sp. (strain ATCC 27184 / PCC 6803 / Kazusa).